A 112-amino-acid polypeptide reads, in one-letter code: Peptidyl-tRNA hydrolase (112 aa).

Belongs to the PTH2 family.

Its subcellular location is the cytoplasm. It carries out the reaction an N-acyl-L-alpha-aminoacyl-tRNA + H2O = an N-acyl-L-amino acid + a tRNA + H(+). Functionally, the natural substrate for this enzyme may be peptidyl-tRNAs which drop off the ribosome during protein synthesis. The protein is Peptidyl-tRNA hydrolase of Methanothermobacter thermautotrophicus (strain ATCC 29096 / DSM 1053 / JCM 10044 / NBRC 100330 / Delta H) (Methanobacterium thermoautotrophicum).